Reading from the N-terminus, the 100-residue chain is Putative pterin-4-alpha-carbinolamine dehydratase (100 aa).

The protein belongs to the pterin-4-alpha-carbinolamine dehydratase family.

The enzyme catalyses (4aS,6R)-4a-hydroxy-L-erythro-5,6,7,8-tetrahydrobiopterin = (6R)-L-erythro-6,7-dihydrobiopterin + H2O. This Bradyrhizobium diazoefficiens (strain JCM 10833 / BCRC 13528 / IAM 13628 / NBRC 14792 / USDA 110) protein is Putative pterin-4-alpha-carbinolamine dehydratase.